Reading from the N-terminus, the 429-residue chain is 3-phosphoshikimate 1-carboxyvinyltransferase (429 aa).

Residues Lys20, Ser21, and Arg25 each contribute to the 3-phosphoshikimate site. Phosphoenolpyruvate is bound at residue Lys20. Phosphoenolpyruvate contacts are provided by Gly89 and Arg118. 3-phosphoshikimate is bound by residues Ser164, Ser165, Gln166, Ser192, Asp311, and Lys338. Residue Gln166 coordinates phosphoenolpyruvate. Asp311 functions as the Proton acceptor in the catalytic mechanism. Phosphoenolpyruvate contacts are provided by Arg342 and Arg384.

Belongs to the EPSP synthase family. Monomer.

It localises to the cytoplasm. It carries out the reaction 3-phosphoshikimate + phosphoenolpyruvate = 5-O-(1-carboxyvinyl)-3-phosphoshikimate + phosphate. It functions in the pathway metabolic intermediate biosynthesis; chorismate biosynthesis. Its function is as follows. Catalyzes the transfer of the enolpyruvyl moiety of phosphoenolpyruvate (PEP) to the 5-hydroxyl of shikimate-3-phosphate (S3P) to produce enolpyruvyl shikimate-3-phosphate and inorganic phosphate. The chain is 3-phosphoshikimate 1-carboxyvinyltransferase from Methanococcus maripaludis (strain C5 / ATCC BAA-1333).